An 819-amino-acid polypeptide reads, in one-letter code: MEPATLTRSSSLTRFPYRRGLSTLRLARVNSFSILPPKTLLRQKPLRISASLNLPPRSIRLRAVEDHHHDHHHDDEQDHHNHHHHHHQHGCCSVELKAESKPQKMLFGFAKAIGWVRLANYLREHLHLCCSAAAMFLAAAVCPYLAPEPYIKSLQNAFMIVGFPLVGVSASLDALMDIAGGKVNIHVLMALAAFASVFMGNALEGGLLLAMFNLAHIAEEFFTSRSMVDVKELKESNPDSALLIEVHNGNVPNISDLSYKSVPVHSVEVGSYVLVGTGEIVPVDCEVYQGSATITIEHLTGEVKPLEAKAGDRVPGGARNLDGRMIVKATKAWNDSTLNKIVQLTEEAHSNKPKLQRWLDEFGENYSKVVVVLSLAIAFLGPFLFKWPFLSTAACRGSVYRALGLMVAASPCALAVAPLAYATAISSCARKGILLKGAQVLDALASCHTIAFDKTGTLTTGGLTCKAIEPIYGHQGGTNSSVITCCIPNCEKEALAVAAAMEKGTTHPIGRAVVDHSVGKDLPSIFVESFEYFPGRGLTATVNGVKTVAEESRLRKASLGSIEFITSLFKSEDESKQIKDAVNASSYGKDFVHAALSVDQKVTLIHLEDQPRPGVSGVIAELKSWARLRVMMLTGDHDSSAWRVANAVGITEVYCNLKPEDKLNHVKNIAREAGGGLIMVGEGINDAPALAAATVGIVLAQRASATAIAVADILLLRDNITGVPFCVAKSRQTTSLVKQNVALALTSIFLAALPSVLGFVPLWLTVLLHEGGTLLVCLNSVRGLNDPSWSWKQDIVHLINKLRSQEPTSSSSNSLSSAH.

The transit peptide at 1-17 (MEPATLTRSSSLTRFPY) directs the protein to the chloroplast. Over 18-122 (RRGLSTLRLA…IGWVRLANYL (105 aa)) the chain is Stromal. The segment covering 66-79 (DHHHDHHHDDEQDH) has biased composition (basic and acidic residues). The disordered stretch occupies residues 66 to 87 (DHHHDHHHDDEQDHHNHHHHHH). The chain crosses the membrane as a helical span at residues 123–144 (REHLHLCCSAAAMFLAAAVCPY). Residues 145-153 (LAPEPYIKS) are Lumenal-facing. The helical transmembrane segment at 154 to 173 (LQNAFMIVGFPLVGVSASLD) threads the bilayer. Topologically, residues 174–180 (ALMDIAG) are stromal. The chain crosses the membrane as a helical span at residues 181–201 (GKVNIHVLMALAAFASVFMGN). Position 202 (Ala-202) is a topological domain, lumenal. Residues 203-223 (LEGGLLLAMFNLAHIAEEFFT) traverse the membrane as a helical segment. Residues 224 to 361 (SRSMVDVKEL…KPKLQRWLDE (138 aa)) are Stromal-facing. Residues 362-384 (FGENYSKVVVVLSLAIAFLGPFL) form a helical membrane-spanning segment. Over 385–398 (FKWPFLSTAACRGS) the chain is Lumenal. The helical transmembrane segment at 399-416 (VYRALGLMVAASPCALAV) threads the bilayer. The Stromal portion of the chain corresponds to 417-737 (APLAYATAIS…AKSRQTTSLV (321 aa)). Asp-453 acts as the 4-aspartylphosphate intermediate in catalysis. The Mg(2+) site is built by Glu-682 and Asp-686. The helical transmembrane segment at 738 to 757 (KQNVALALTSIFLAALPSVL) threads the bilayer. The Lumenal segment spans residues 758-762 (GFVPL). The helical transmembrane segment at 763–781 (WLTVLLHEGGTLLVCLNSV) threads the bilayer. Residues 782–819 (RGLNDPSWSWKQDIVHLINKLRSQEPTSSSSNSLSSAH) lie on the Stromal side of the membrane.

It belongs to the cation transport ATPase (P-type) (TC 3.A.3) family. Type IB subfamily.

The protein resides in the plastid. Its subcellular location is the chloroplast inner membrane. The enzyme catalyses Zn(2+)(in) + ATP + H2O = Zn(2+)(out) + ADP + phosphate + H(+). It catalyses the reaction Cd(2+)(in) + ATP + H2O = Cd(2+)(out) + ADP + phosphate + H(+). Functionally, involved in cadmium/zinc transport. This Arabidopsis thaliana (Mouse-ear cress) protein is Probable cadmium/zinc-transporting ATPase HMA1, chloroplastic (HMA1).